Here is a 642-residue protein sequence, read N- to C-terminus: Chaperone protein HtpG (642 aa).

Residues 1-350 (MATDTQKETL…SNDLSLNVSR (350 aa)) form an a; substrate-binding region. The interval 351–567 (EILQNDHAVD…EYDMGLQMRR (217 aa)) is b. A c region spans residues 568 to 642 (LLEQAGQKLP…MNKLIVQLSK (75 aa)).

Belongs to the heat shock protein 90 family. In terms of assembly, homodimer.

Its subcellular location is the cytoplasm. Its function is as follows. Molecular chaperone. Has ATPase activity. The protein is Chaperone protein HtpG of Marinomonas sp. (strain MWYL1).